Consider the following 288-residue polypeptide: Pyrroline-5-carboxylate reductase 3 (288 aa).

It belongs to the pyrroline-5-carboxylate reductase family. As to quaternary structure, homodecamer; composed of 5 homodimers.

The protein localises to the cytoplasm. The catalysed reaction is L-proline + NADP(+) = (S)-1-pyrroline-5-carboxylate + NADPH + 2 H(+). It catalyses the reaction L-proline + NAD(+) = (S)-1-pyrroline-5-carboxylate + NADH + 2 H(+). The protein operates within amino-acid biosynthesis; L-proline biosynthesis; L-proline from L-glutamate 5-semialdehyde: step 1/1. Its function is as follows. Oxidoreductase that catalyzes the last step in proline biosynthesis, which corresponds to the reduction of pyrroline-5-carboxylate (P5C) to L-proline using NAD(P)H. Proline is synthesized from either glutamate or ornithine; both are converted to P5C, and then to proline via pyrroline-5-carboxylate reductases (PYCRs). PYCR3 is exclusively linked to the biosynthesis of proline from ornithine. This Danio rerio (Zebrafish) protein is Pyrroline-5-carboxylate reductase 3.